Consider the following 362-residue polypeptide: MATSQTKELPRPQLFTVMTRYIPGLVLTGVITGLALNVGDMPWFINMGLGALTLAILFGIIVGNTLYPWLQPVCSDGVVYAKQYLLRLGIILYGFRLTFQQVADVGATGMVIDLLTLSSTFILACWLGKRVFGLDQQTVMLIGAGSSICGAAAIMATEPVLKADASKVAVAVATVVIFGTLAIFVYPWLYQLNLHYQWLPFSQETFGIFAGSTIHEVAQVVAAGHAIGPDAENAAVITKMIRVMMLAPFLLLLSAYLGRSRIKTSGEKREKSAITIPWFAVIFILMAGFNSLNLLPAVWVNHLITLDTILLAMAMAALGLTTHIGSIRQAGVKPLLLALLLFIWLLVGGTGINLFVQHIALV.

Helical transmembrane passes span 21–38 (YIPG…ALNV), 48–70 (GLGA…YPWL), 102–124 (VADV…FILA), 139–161 (VMLI…EPVL), 168–190 (VAVA…PWLY), 240–257 (MIRV…SAYL), 278–300 (WFAV…AVWV), 305–327 (TLDT…IGSI), and 334–356 (PLLL…NLFV).

Belongs to the UPF0324 family.

The protein resides in the cell membrane. The protein is UPF0324 membrane protein YPO1307/y2878/YP_1285 of Yersinia pestis.